Here is a 229-residue protein sequence, read N- to C-terminus: NAD-dependent protein deacylase (229 aa).

The Deacetylase sirtuin-type domain occupies Met1–Met227. Position 9 to 28 (Gly9 to Trp28) interacts with NAD(+). Substrate is bound by residues Tyr53 and Arg56. Residue Gln86–Asp89 coordinates NAD(+). His104 (proton acceptor) is an active-site residue. Residue Gly169–Ser171 participates in NAD(+) binding.

This sequence belongs to the sirtuin family. Class III subfamily.

It localises to the cytoplasm. The enzyme catalyses N(6)-acetyl-L-lysyl-[protein] + NAD(+) + H2O = 2''-O-acetyl-ADP-D-ribose + nicotinamide + L-lysyl-[protein]. It carries out the reaction N(6)-succinyl-L-lysyl-[protein] + NAD(+) + H2O = 2''-O-succinyl-ADP-D-ribose + nicotinamide + L-lysyl-[protein]. In terms of biological role, NAD-dependent lysine deacetylase and desuccinylase that specifically removes acetyl and succinyl groups on target proteins. Modulates the activities of several proteins which are inactive in their acylated form. The protein is NAD-dependent protein deacylase of Helicobacter pylori (strain ATCC 700392 / 26695) (Campylobacter pylori).